Consider the following 300-residue polypeptide: Cation-efflux pump FieF (300 aa).

4 helical membrane-spanning segments follow: residues Ala12 to Trp32, Ile39 to Val59, Ala82 to Ile102, and Pro114 to Phe134. Zn(2+) contacts are provided by Asp45 and Asp49. 2 residues coordinate Zn(2+): His153 and Asp157. A run of 2 helical transmembrane segments spans residues Ser156–His176 and Ala178–Gly198.

The protein belongs to the cation diffusion facilitator (CDF) transporter (TC 2.A.4) family. FieF subfamily. In terms of assembly, homodimer.

It is found in the cell inner membrane. The catalysed reaction is Zn(2+)(in) + H(+)(out) = Zn(2+)(out) + H(+)(in). The enzyme catalyses Cd(2+)(in) + H(+)(out) = Cd(2+)(out) + H(+)(in). It catalyses the reaction Fe(2+)(in) + H(+)(out) = Fe(2+)(out) + H(+)(in). In terms of biological role, divalent metal cation transporter which exports Zn(2+), Cd(2+) and possibly Fe(2+). May be involved in zinc and iron detoxification by efflux. The chain is Cation-efflux pump FieF from Shigella boydii serotype 18 (strain CDC 3083-94 / BS512).